A 242-amino-acid polypeptide reads, in one-letter code: ATP-dependent dethiobiotin synthetase BioD (242 aa).

12–17 (EVGKTV) is a binding site for ATP. Residue T16 participates in Mg(2+) binding. Residue K37 is part of the active site. S41 is a substrate binding site. ATP contacts are provided by residues D51 and 112–115 (EGAG). Positions 51 and 112 each coordinate Mg(2+).

Belongs to the dethiobiotin synthetase family. In terms of assembly, homodimer. The cofactor is Mg(2+).

The protein localises to the cytoplasm. The catalysed reaction is (7R,8S)-7,8-diammoniononanoate + CO2 + ATP = (4R,5S)-dethiobiotin + ADP + phosphate + 3 H(+). It functions in the pathway cofactor biosynthesis; biotin biosynthesis; biotin from 7,8-diaminononanoate: step 1/2. Its function is as follows. Catalyzes a mechanistically unusual reaction, the ATP-dependent insertion of CO2 between the N7 and N8 nitrogen atoms of 7,8-diaminopelargonic acid (DAPA, also called 7,8-diammoniononanoate) to form a ureido ring. This is ATP-dependent dethiobiotin synthetase BioD from Bacillus cereus (strain ATCC 14579 / DSM 31 / CCUG 7414 / JCM 2152 / NBRC 15305 / NCIMB 9373 / NCTC 2599 / NRRL B-3711).